The following is a 285-amino-acid chain: NADPH-dependent 7-cyano-7-deazaguanine reductase (285 aa).

Substrate is bound at residue 91 to 93 (IES). 93–94 (SK) serves as a coordination point for NADPH. The Thioimide intermediate role is filled by C191. D198 functions as the Proton donor in the catalytic mechanism. 230-231 (HE) is a substrate binding site. 259–260 (RG) lines the NADPH pocket.

It belongs to the GTP cyclohydrolase I family. QueF type 2 subfamily. In terms of assembly, homodimer.

It is found in the cytoplasm. It carries out the reaction 7-aminomethyl-7-carbaguanine + 2 NADP(+) = 7-cyano-7-deazaguanine + 2 NADPH + 3 H(+). It participates in tRNA modification; tRNA-queuosine biosynthesis. Catalyzes the NADPH-dependent reduction of 7-cyano-7-deazaguanine (preQ0) to 7-aminomethyl-7-deazaguanine (preQ1). The chain is NADPH-dependent 7-cyano-7-deazaguanine reductase from Legionella pneumophila (strain Paris).